Here is a 108-residue protein sequence, read N- to C-terminus: Protein S100-A15A (108 aa).

Residues 53–88 (KEPYYITELFQAADKNKDNQICFDEFLYILGKLVKD) form the EF-hand domain. Positions 66, 68, 70, 72, and 77 each coordinate Ca(2+).

It belongs to the S-100 family.

In Pongo abelii (Sumatran orangutan), this protein is Protein S100-A15A (S100A15A).